The primary structure comprises 146 residues: UPF0178 protein BAMEG_1545 (146 aa).

Belongs to the UPF0178 family.

The polypeptide is UPF0178 protein BAMEG_1545 (Bacillus anthracis (strain CDC 684 / NRRL 3495)).